The chain runs to 248 residues: Large ribosomal subunit protein uL10m (248 aa).

The N-terminal 24 residues, 1–24 (MATLIQRSLSLAKSSTPALQFLRF), are a transit peptide targeting the mitochondrion.

This sequence belongs to the universal ribosomal protein uL10 family. Component of the mitochondrial ribosome large subunit (39S) which comprises a 16S rRNA and about 50 distinct proteins.

It localises to the mitochondrion. This is Large ribosomal subunit protein uL10m (mRpL10) from Drosophila melanogaster (Fruit fly).